The following is a 959-amino-acid chain: Translation initiation factor IF-2 (959 aa).

The segment covering 1 to 10 (MSDKTNDDKT) has biased composition (basic and acidic residues). The tract at residues 1 to 374 (MSDKTNDDKT…SQMQETREKI (374 aa)) is disordered. Residues 27–37 (EQSTVRQNFSH) show a composition bias toward polar residues. Low complexity-rich tracts occupy residues 63 to 118 (AAAA…VTKP) and 128 to 138 (QRPGGQQAQRP). Basic and acidic residues-rich tracts occupy residues 154–225 (SEMD…EAAK) and 232–241 (ARSERRDDAR). Positions 246–284 (GARPQQAGRPQGGRPQPAGRPQQGSPRPAPIIADAAPIA) are enriched in low complexity. A compositionally biased stretch (basic and acidic residues) spans 318-333 (PEVRAPKVVKGEDDRR). Residues 457-626 (SRPPVVTIMG…LLQAEMLDLK (170 aa)) form the tr-type G domain. Residues 466–473 (GHVDHGKT) form a G1 region. GTP is bound at residue 466-473 (GHVDHGKT). The tract at residues 491–495 (GITQH) is G2. Positions 512–515 (DTPG) are G3. GTP-binding positions include 512–516 (DTPGH) and 566–569 (NKID). The tract at residues 566 to 569 (NKID) is G4. The tract at residues 602-604 (SAK) is G5.

Belongs to the TRAFAC class translation factor GTPase superfamily. Classic translation factor GTPase family. IF-2 subfamily.

The protein localises to the cytoplasm. One of the essential components for the initiation of protein synthesis. Protects formylmethionyl-tRNA from spontaneous hydrolysis and promotes its binding to the 30S ribosomal subunits. Also involved in the hydrolysis of GTP during the formation of the 70S ribosomal complex. This chain is Translation initiation factor IF-2, found in Brucella abortus (strain 2308).